Reading from the N-terminus, the 337-residue chain is Protoheme IX farnesyltransferase (337 aa).

Over residues Met-1–Val-17 the composition is skewed to polar residues. Residues Met-1–Arg-41 form a disordered region. Over residues Asp-27–Arg-41 the composition is skewed to basic and acidic residues. A run of 8 helical transmembrane segments spans residues Ile-59–Pro-79, Leu-81–Phe-101, Ser-130–Ala-150, Leu-153–Leu-173, Trp-196–Trp-216, Val-250–Pro-270, Val-271–Val-291, and Pro-311–Val-331.

The protein belongs to the UbiA prenyltransferase family. Protoheme IX farnesyltransferase subfamily.

Its subcellular location is the cell membrane. The catalysed reaction is heme b + (2E,6E)-farnesyl diphosphate + H2O = Fe(II)-heme o + diphosphate. Its pathway is porphyrin-containing compound metabolism; heme O biosynthesis; heme O from protoheme: step 1/1. Its function is as follows. Converts heme B (protoheme IX) to heme O by substitution of the vinyl group on carbon 2 of heme B porphyrin ring with a hydroxyethyl farnesyl side group. The sequence is that of Protoheme IX farnesyltransferase from Cutibacterium acnes (strain DSM 16379 / KPA171202) (Propionibacterium acnes).